We begin with the raw amino-acid sequence, 162 residues long: SsrA-binding protein (162 aa).

The disordered stretch occupies residues 140–162; sequence DKRETAAKRDWSRQKSRLMKDHG.

It belongs to the SmpB family.

Its subcellular location is the cytoplasm. Required for rescue of stalled ribosomes mediated by trans-translation. Binds to transfer-messenger RNA (tmRNA), required for stable association of tmRNA with ribosomes. tmRNA and SmpB together mimic tRNA shape, replacing the anticodon stem-loop with SmpB. tmRNA is encoded by the ssrA gene; the 2 termini fold to resemble tRNA(Ala) and it encodes a 'tag peptide', a short internal open reading frame. During trans-translation Ala-aminoacylated tmRNA acts like a tRNA, entering the A-site of stalled ribosomes, displacing the stalled mRNA. The ribosome then switches to translate the ORF on the tmRNA; the nascent peptide is terminated with the 'tag peptide' encoded by the tmRNA and targeted for degradation. The ribosome is freed to recommence translation, which seems to be the essential function of trans-translation. This chain is SsrA-binding protein, found in Roseobacter denitrificans (strain ATCC 33942 / OCh 114) (Erythrobacter sp. (strain OCh 114)).